The primary structure comprises 447 residues: Glutamine synthetase (447 aa).

Residues Arg-20 to Gly-105 enclose the GS beta-grasp domain. The GS catalytic domain occupies Pro-112–Leu-447. Glu-135 and Glu-137 together coordinate Mg(2+). Residue Glu-187 coordinates ATP. The Mg(2+) site is built by Glu-192 and Glu-199. Residues Asn-243 to Gly-244 and Gly-244 each bind L-glutamate. His-248 is a Mg(2+) binding site. Ser-252 lines the ATP pocket. Residues Arg-301, Glu-307, and Arg-319 each contribute to the L-glutamate site. Residues Arg-319 and Arg-324 each contribute to the ATP site. Glu-336 lines the Mg(2+) pocket. An L-glutamate-binding site is contributed by Arg-338.

This sequence belongs to the glutamine synthetase family. Homohexamer. Interacts and forms stable complexes with the regulatory protein GlnK1. Mg(2+) serves as cofactor.

Its subcellular location is the cytoplasm. The enzyme catalyses L-glutamate + NH4(+) + ATP = L-glutamine + ADP + phosphate + H(+). Its activity is regulated as follows. Directly stimulated by the effector molecule 2-oxoglutarate. Inhibited by GlnK1. 2-oxoglutarate antagonizes the inhibitory effects of GlnK1, but does not prevent GlnK1/GlnA1 complex formation. In terms of biological role, probably involved in nitrogen metabolism via ammonium assimilation. Catalyzes the ATP-dependent biosynthesis of glutamine from glutamate and ammonia. This is Glutamine synthetase from Methanosarcina mazei (strain ATCC BAA-159 / DSM 3647 / Goe1 / Go1 / JCM 11833 / OCM 88) (Methanosarcina frisia).